A 602-amino-acid chain; its full sequence is Pro-neuregulin-1, membrane-bound isoform (602 aa).

Topologically, residues methionine 1–arginine 206 are extracellular. N-linked (GlcNAc...) asparagine glycosylation occurs at asparagine 21. In terms of domain architecture, Ig-like C2-type spans proline 29 to threonine 123. A disulfide bond links cysteine 49 and cysteine 105. 2 N-linked (GlcNAc...) asparagine glycosylation sites follow: asparagine 113 and asparagine 126. The 45-residue stretch at histidine 137–glutamine 181 folds into the EGF-like domain. Intrachain disulfides connect cysteine 141–cysteine 155, cysteine 149–cysteine 169, and cysteine 171–cysteine 180. A helical membrane pass occupies residues valine 207–cysteine 229. Residues lysine 230–valine 602 lie on the Cytoplasmic side of the membrane. Disordered stretches follow at residues glutamate 293 to serine 366, methionine 391 to serine 421, phenylalanine 460 to leucine 479, and glutamate 486 to isoleucine 553. Residues threonine 294 to threonine 314 show a composition bias toward low complexity. The span at proline 315 to threonine 324 shows a compositional bias: polar residues. Positions glutamate 325–glutamate 341 are enriched in low complexity. A compositionally biased stretch (polar residues) spans phenylalanine 460–leucine 474. Residues threonine 504–proline 514 are compositionally biased toward basic residues. A compositionally biased stretch (low complexity) spans aspartate 527–glutamate 536.

This sequence belongs to the neuregulin family. Post-translationally, proteolytic cleavage close to the plasma membrane on the external face leads to the release of the soluble growth factor form. In terms of processing, extensive glycosylation precedes the proteolytic cleavage.

The protein localises to the cell membrane. It is found in the secreted. Direct ligand for the ERBB tyrosine kinase receptors. The multiple isoforms perform diverse functions: cysteine-rich domain containing isoforms (isoform 2-isoform 4) probably regulate the expression of nicotinic acetylcholine receptors at developing interneuronal synapses. Isoform Ig-NRG is required for the initial induction and/or maintenance of the mature levels of acetylcholine receptors at neuromuscular synapses. Binds to ERBB3 and integrins to form a complex which is essential for NRG1-ERBB signaling. This is Pro-neuregulin-1, membrane-bound isoform (NRG1) from Gallus gallus (Chicken).